Reading from the N-terminus, the 361-residue chain is MAGNSIGQLFRVTTFGESHGLALGCIVDGVPPGIELTEADLQHDLDRRRPGTSRYTTQRREPDQVKILSGVFEGRTTGTSIGLLIENTDQRSQDYGAIKDVFRPGHADYTYEQKFGFRDYRGGGRSSARETAMRVAAGAIAKKYLAQKFGIVIRGCLTQMGDIPLAIKDWDLVEQNPFFCADADKIDALDELMRALKKEGDSIGAKVTVIADGVPPGLGEPVFDRLDADIAHAMMSINAVKGVEIGDGFEVVALRGSQNRDEITAQGFQSNHAGGILGGISSGQQIVANIALKPTSSITVPGHTINRAGEEVEMITKGRHDPCVGIRAVPIAEAMLAIVLMDHFLRQRAQNADVIPPLPRW.

NADP(+) is bound by residues arginine 48 and arginine 54. FMN is bound by residues 125–127 (RSS), 238–239 (NA), glycine 278, 293–297 (KPTSS), and arginine 319.

It belongs to the chorismate synthase family. In terms of assembly, homotetramer. FMNH2 is required as a cofactor.

The catalysed reaction is 5-O-(1-carboxyvinyl)-3-phosphoshikimate = chorismate + phosphate. It participates in metabolic intermediate biosynthesis; chorismate biosynthesis; chorismate from D-erythrose 4-phosphate and phosphoenolpyruvate: step 7/7. In terms of biological role, catalyzes the anti-1,4-elimination of the C-3 phosphate and the C-6 proR hydrogen from 5-enolpyruvylshikimate-3-phosphate (EPSP) to yield chorismate, which is the branch point compound that serves as the starting substrate for the three terminal pathways of aromatic amino acid biosynthesis. This reaction introduces a second double bond into the aromatic ring system. The sequence is that of Chorismate synthase from Enterobacter sp. (strain 638).